A 499-amino-acid polypeptide reads, in one-letter code: Thioredoxin reductase 1, cytoplasmic (499 aa).

FAD-binding positions include Ser-22–Gly-23, Asp-42–Phe-43, Thr-58–Cys-59, and Ser-63–Lys-67. The cysteines at positions 59 and 64 are disulfide-linked. Residue Lys-68 is modified to N6-succinyllysine. At Tyr-131 the chain carries Phosphotyrosine. Residues Tyr-131 to Gly-132 and Thr-161 contribute to the FAD site. Residues Arg-166, Ala-198–Glu-204, Arg-221–Ser-222, Arg-226, Arg-226–Phe-228, Gly-292–Arg-293, and Lys-315 contribute to the NADP(+) site. Tyr-200 contributes to the FAD binding site. Residues Asp-334, Glu-341–Thr-343, and His-472 each bind FAD. Glu-341 contacts NADP(+). His-472 functions as the Proton acceptor in the catalytic mechanism. Positions Cys-497 to Sec-498 form a cross-link, cysteinyl-selenocysteine (Cys-Sec). Sec-498 is a non-standard amino acid (selenocysteine).

This sequence belongs to the class-I pyridine nucleotide-disulfide oxidoreductase family. Homodimer. FAD is required as a cofactor. ISGylated.

It localises to the cytoplasm. The enzyme catalyses [thioredoxin]-dithiol + NADP(+) = [thioredoxin]-disulfide + NADPH + H(+). The catalysed reaction is H2O2 + NADPH + H(+) = NADP(+) + 2 H2O. Its function is as follows. Reduces disulfideprotein thioredoxin (Trx) to its dithiol-containing form. Homodimeric flavoprotein involved in the regulation of cellular redox reactions, growth and differentiation. Contains a selenocysteine residue at the C-terminal active site that is essential for catalysis. Also has reductase activity on hydrogen peroxide (H2O2). This is Thioredoxin reductase 1, cytoplasmic (TXNRD1) from Sus scrofa (Pig).